Consider the following 233-residue polypeptide: 5'-methylthioadenosine/S-adenosylhomocysteine nucleosidase (233 aa).

The active-site Proton acceptor is the glutamate 12. Residues glycine 78, isoleucine 156, and 177-178 contribute to the substrate site; that span reads ME. The active-site Proton donor is aspartate 201.

It belongs to the PNP/UDP phosphorylase family. MtnN subfamily.

The enzyme catalyses S-adenosyl-L-homocysteine + H2O = S-(5-deoxy-D-ribos-5-yl)-L-homocysteine + adenine. It carries out the reaction S-methyl-5'-thioadenosine + H2O = 5-(methylsulfanyl)-D-ribose + adenine. The catalysed reaction is 5'-deoxyadenosine + H2O = 5-deoxy-D-ribose + adenine. It participates in amino-acid biosynthesis; L-methionine biosynthesis via salvage pathway; S-methyl-5-thio-alpha-D-ribose 1-phosphate from S-methyl-5'-thioadenosine (hydrolase route): step 1/2. Its function is as follows. Catalyzes the irreversible cleavage of the glycosidic bond in both 5'-methylthioadenosine (MTA) and S-adenosylhomocysteine (SAH/AdoHcy) to adenine and the corresponding thioribose, 5'-methylthioribose and S-ribosylhomocysteine, respectively. Also cleaves 5'-deoxyadenosine, a toxic by-product of radical S-adenosylmethionine (SAM) enzymes, into 5-deoxyribose and adenine. The protein is 5'-methylthioadenosine/S-adenosylhomocysteine nucleosidase of Listeria innocua serovar 6a (strain ATCC BAA-680 / CLIP 11262).